We begin with the raw amino-acid sequence, 879 residues long: Phosphoenolpyruvate carboxylase (879 aa).

Catalysis depends on residues histidine 138 and lysine 545.

The protein belongs to the PEPCase type 1 family. Mg(2+) is required as a cofactor.

The enzyme catalyses oxaloacetate + phosphate = phosphoenolpyruvate + hydrogencarbonate. Its function is as follows. Forms oxaloacetate, a four-carbon dicarboxylic acid source for the tricarboxylic acid cycle. The chain is Phosphoenolpyruvate carboxylase from Haemophilus influenzae (strain 86-028NP).